Consider the following 1336-residue polypeptide: Mating factor M secretion protein mam1 (1336 aa).

The interval 1–29 (MHIHSDLSLPQFEHASIDPPSYSPQKSSF) is disordered. Residues 1-91 (MHIHSDLSLP…ELAGVSSWSD (91 aa)) are Cytoplasmic-facing. A helical transmembrane segment spans residues 92 to 112 (FFYLFHFSDIPLIFGTLIFTC). Positions 104–396 (IFGTLIFTCL…ILPAIPDLIK (293 aa)) constitute an ABC transmembrane type-1 1 domain. Residues 113–153 (LSAALEPLMTWTTGKVFDALSQYATSQITLGKMISLINFNS) lie on the Extracellular side of the membrane. A helical membrane pass occupies residues 154 to 174 (LLITIFGLASCVFSFGVRFLW). At 175 to 250 (QYLSAIAGKR…SCLIISFRYS (76 aa)) the chain is on the cytoplasmic side. The helical transmembrane segment at 251-271 (WSLTLVVLASYPIIILVVGFI) threads the bilayer. Residues 272 to 778 (NSFLSSAYEK…KSIWKVKKLR (507 aa)) are Extracellular-facing. The 236-residue stretch at 433–668 (FRFDNVSFAY…EDFENNVSID (236 aa)) folds into the ABC transporter 1 domain. N-linked (GlcNAc...) asparagine glycans are attached at residues Asn437 and Asn454. An ATP-binding site is contributed by 469–476 (GPSGSGKS). Asn536, Asn664, and Asn697 each carry an N-linked (GlcNAc...) asparagine glycan. The helical transmembrane segment at 779-799 (WFFLLGLLTSLIQGASVPIFA) threads the bilayer. Residues 781–1066 (FLLGLLTSLI…CIMSLPNVSA (286 aa)) form the ABC transmembrane type-1 2 domain. Residues 800-897 (YVISKCLNLF…ISDMRNMISS (98 aa)) lie on the Cytoplasmic side of the membrane. A helical membrane pass occupies residues 898-918 (LIEEVFIAFTMAIIGIAWSFA). The Extracellular segment spans residues 919-1336 (TGWRLAAVLV…KLIHRGEWIE (418 aa)). N-linked (GlcNAc...) asparagine glycans are attached at residues Asn1011, Asn1063, and Asn1120. The 233-residue stretch at 1099–1331 (IEFDGVSFAY…HTHFWKLIHR (233 aa)) folds into the ABC transporter 2 domain. Residue 1135-1142 (GISGSGKS) participates in ATP binding. 2 N-linked (GlcNAc...) asparagine glycosylation sites follow: Asn1235 and Asn1280.

This sequence belongs to the ABC transporter superfamily. Alpha-factor sex pheromone exporter (TC 3.A.1.206) family.

It localises to the membrane. Required in S.pombe M (minus) cells for production of M-factor pheromone. Involved in the transport of the farnesyl-derivation of the M-factor pheromone. This Schizosaccharomyces pombe (strain 972 / ATCC 24843) (Fission yeast) protein is Mating factor M secretion protein mam1 (mam1).